The following is a 305-amino-acid chain: N-acetyl-D-glucosamine kinase (305 aa).

ATP contacts are provided by residues 4-11 (GFDIGGTK) and 133-140 (GFGGGLVF). 4 residues coordinate Zn(2+): His-157, Cys-178, Cys-180, and Cys-185.

Belongs to the ROK (NagC/XylR) family. NagK subfamily.

The catalysed reaction is N-acetyl-D-glucosamine + ATP = N-acetyl-D-glucosamine 6-phosphate + ADP + H(+). It participates in cell wall biogenesis; peptidoglycan recycling. Catalyzes the phosphorylation of N-acetyl-D-glucosamine (GlcNAc) derived from cell-wall degradation, yielding GlcNAc-6-P. The sequence is that of N-acetyl-D-glucosamine kinase from Histophilus somni (strain 129Pt) (Haemophilus somnus).